Consider the following 201-residue polypeptide: 3-isopropylmalate dehydratase small subunit (201 aa).

This sequence belongs to the LeuD family. LeuD type 1 subfamily. In terms of assembly, heterodimer of LeuC and LeuD.

It carries out the reaction (2R,3S)-3-isopropylmalate = (2S)-2-isopropylmalate. It participates in amino-acid biosynthesis; L-leucine biosynthesis; L-leucine from 3-methyl-2-oxobutanoate: step 2/4. Its function is as follows. Catalyzes the isomerization between 2-isopropylmalate and 3-isopropylmalate, via the formation of 2-isopropylmaleate. The chain is 3-isopropylmalate dehydratase small subunit from Nitrobacter winogradskyi (strain ATCC 25391 / DSM 10237 / CIP 104748 / NCIMB 11846 / Nb-255).